A 513-amino-acid chain; its full sequence is ATP synthase subunit alpha (513 aa).

ATP is bound at residue 169–176 (GDRQTGKT).

Belongs to the ATPase alpha/beta chains family. F-type ATPases have 2 components, CF(1) - the catalytic core - and CF(0) - the membrane proton channel. CF(1) has five subunits: alpha(3), beta(3), gamma(1), delta(1), epsilon(1). CF(0) has three main subunits: a(1), b(2) and c(9-12). The alpha and beta chains form an alternating ring which encloses part of the gamma chain. CF(1) is attached to CF(0) by a central stalk formed by the gamma and epsilon chains, while a peripheral stalk is formed by the delta and b chains.

The protein localises to the cell inner membrane. The catalysed reaction is ATP + H2O + 4 H(+)(in) = ADP + phosphate + 5 H(+)(out). Functionally, produces ATP from ADP in the presence of a proton gradient across the membrane. The alpha chain is a regulatory subunit. This chain is ATP synthase subunit alpha, found in Klebsiella pneumoniae (strain 342).